The chain runs to 862 residues: Rab GTPase-binding effector protein 1 (862 aa).

Ala-2 bears the N-acetylalanine mark. A coiled-coil region spans residues 11 to 345; that stretch reads DVSLQQRVAE…KKTDTEEEVK (335 aa). Lys-282 bears the N6-acetyllysine mark. The interval 315-374 is disordered; the sequence is ELKKKDQEEDEQQRVNKRKDNKKTDTEEEVKIPVVCALTQEESSTPLSNEEEHLDSTHGS. A compositionally biased stretch (basic and acidic residues) spans 336-345; the sequence is KKTDTEEEVK. Ser-374, Ser-377, and Ser-407 each carry phosphoserine. Thr-408 carries the phosphothreonine modification. The residue at position 410 (Ser-410) is a Phosphoserine. Residues 534-816 adopt a coiled-coil conformation; sequence DMCSNYEKQL…LQTELDVSEQ (283 aa).

It belongs to the rabaptin family. As to quaternary structure, heterodimer with RABGEF1. The heterodimer binds RAB4A and RAB5A that have been activated by GTP-binding. Interacts with TSC2. Interacts with GGA1 (via GAE domain), GGA2 (via GAE domain) and GGA3 (via GAE domain). Interacts with AP1G1 (via GAE domain). Interacts with AP1G2 (via GAE domain). Interacts with ECPAS. Interacts with KCNH1. Interacts with PKD1 (via C-terminal domain) and GGA1; the interactions recruit PKD1:PKD2 complex to GGA1 and ARL3 at trans-Golgi network. Interacts with KCNH1. Proteolytic cleavage by caspases in apoptotic cells causes loss of endosome fusion activity.

It is found in the cytoplasm. Its subcellular location is the early endosome. The protein resides in the recycling endosome. It localises to the cytoplasmic vesicle. Functionally, rab effector protein acting as linker between gamma-adaptin, RAB4A and RAB5A. Involved in endocytic membrane fusion and membrane trafficking of recycling endosomes. Involved in KCNH1 channels trafficking to and from the cell membrane. Stimulates RABGEF1 mediated nucleotide exchange on RAB5A. Mediates the traffic of PKD1:PKD2 complex from the endoplasmic reticulum through the Golgi to the cilium. This chain is Rab GTPase-binding effector protein 1 (Rabep1), found in Mus musculus (Mouse).